Consider the following 213-residue polypeptide: Orotate phosphoribosyltransferase (213 aa).

K26 serves as a coordination point for 5-phospho-alpha-D-ribose 1-diphosphate. Position 34-35 (34-35) interacts with orotate; sequence FF. Residues 72 to 73, R99, K100, K103, H105, and 124 to 132 contribute to the 5-phospho-alpha-D-ribose 1-diphosphate site; these read YK and DDVITAGTA. Orotate is bound by residues T128 and R156.

It belongs to the purine/pyrimidine phosphoribosyltransferase family. PyrE subfamily. Homodimer. Requires Mg(2+) as cofactor.

The enzyme catalyses orotidine 5'-phosphate + diphosphate = orotate + 5-phospho-alpha-D-ribose 1-diphosphate. Its pathway is pyrimidine metabolism; UMP biosynthesis via de novo pathway; UMP from orotate: step 1/2. Functionally, catalyzes the transfer of a ribosyl phosphate group from 5-phosphoribose 1-diphosphate to orotate, leading to the formation of orotidine monophosphate (OMP). This chain is Orotate phosphoribosyltransferase, found in Shigella dysenteriae serotype 1 (strain Sd197).